The chain runs to 446 residues: L-2-hydroxyglutarate dehydrogenase, mitochondrial (446 aa).

The transit peptide at 1–28 directs the protein to the mitochondrion; sequence MKNSSSMLKGVKSFIGSGIYTNKPIYDV.

The protein belongs to the L2HGDH family. FAD serves as cofactor.

It is found in the mitochondrion. The catalysed reaction is (S)-2-hydroxyglutarate + A = 2-oxoglutarate + AH2. This chain is L-2-hydroxyglutarate dehydrogenase, mitochondrial (l2hgdh), found in Dictyostelium discoideum (Social amoeba).